Consider the following 318-residue polypeptide: Pyrimidine-specific ribonucleoside hydrolase RihA (318 aa).

Residue His240 is part of the active site.

It belongs to the IUNH family. RihA subfamily.

In terms of biological role, hydrolyzes cytidine or uridine to ribose and cytosine or uracil, respectively. The sequence is that of Pyrimidine-specific ribonucleoside hydrolase RihA from Shewanella baltica (strain OS185).